The sequence spans 382 residues: HVDHGKTTLTAAITKVMSLKGAAQFMAYDQIDNAPEERARGITIAIRHVEYQTDKRHYAHVDCPGHADYIKNMITGAAQMDGAILVVSAPDGPMPQTREHILLARQVQVPAIVVFLNKVDMMDDPELLELVELELRELLSKYGFPGDEIPIVRGTARNALESPSKDINAPEYKCILELMNAVDEYIPTPQRAVDQPFLMPIEDVFGIKGRGTVVTGRIERGKVKVGDTVEIVGMTNDAPRRTVVTGVEMFQKTLDEGIAGDNVGCLLRGIERTDVERGQVLCAPGSIKPHKKFEAQVYVLKKEEGGRHTPFFSGYRPQFYIRTTDVTGAIGLPAGMEMVMPGDNVVMTIELIVPVAIEEGLRFAIREGGRTVGAGVVTKILD.

GTP is bound by residues 1–7 (HVDHGKT), 62–66 (DCPGH), and 117–120 (NKVD). The region spanning 1-190 (HVDHGKTTLT…AVDEYIPTPQ (190 aa)) is the tr-type G domain. Thr-7 lines the Mg(2+) pocket.

It belongs to the TRAFAC class translation factor GTPase superfamily. Classic translation factor GTPase family. EF-Tu/EF-1A subfamily. As to quaternary structure, monomer.

Its subcellular location is the cytoplasm. The catalysed reaction is GTP + H2O = GDP + phosphate + H(+). GTP hydrolase that promotes the GTP-dependent binding of aminoacyl-tRNA to the A-site of ribosomes during protein biosynthesis. In Chloroflexus aurantiacus, this protein is Elongation factor Tu.